An 84-amino-acid chain; its full sequence is U1-theraphotoxin-Hs1a (84 aa).

The N-terminal stretch at 1-22 (MKVTLIAILTCAAVLVLHTTAA) is a signal peptide. Residues 23–48 (EELEESQLMEVGMPDTELAAVDEERL) constitute a propeptide that is removed on maturation. Intrachain disulfides connect Cys51–Cys65, Cys55–Cys76, and Cys70–Cys81.

The protein belongs to the neurotoxin 12 (Hwtx-2) family. 02 (Hwtx-2) subfamily. As to expression, expressed by the venom gland.

Its subcellular location is the secreted. Blocks neuromuscular transmission. Acts cooperatively to potentiate the activity of huwentoxin-I. Paralyzes locusts and kills mice following intracerebroventricular injection. The chain is U1-theraphotoxin-Hs1a from Cyriopagopus schmidti (Chinese bird spider).